An 83-amino-acid polypeptide reads, in one-letter code: Large ribosomal subunit protein bL31B (83 aa).

Belongs to the bacterial ribosomal protein bL31 family. Type B subfamily. As to quaternary structure, part of the 50S ribosomal subunit.

The protein is Large ribosomal subunit protein bL31B of Leifsonia xyli subsp. xyli (strain CTCB07).